Consider the following 200-residue polypeptide: Putative pseudouridine methyltransferase (200 aa).

Residues Met-133 and Cys-187 each coordinate S-adenosyl-L-methionine.

It belongs to the methyltransferase superfamily. TrmY family.

Its subcellular location is the cytoplasm. This Alcanivorax borkumensis (strain ATCC 700651 / DSM 11573 / NCIMB 13689 / SK2) protein is Putative pseudouridine methyltransferase.